A 232-amino-acid polypeptide reads, in one-letter code: Pyridoxine 5'-phosphate synthase (232 aa).

Asparagine 7 is a 3-amino-2-oxopropyl phosphate binding site. 9-10 (DH) is a binding site for 1-deoxy-D-xylulose 5-phosphate. Arginine 18 serves as a coordination point for 3-amino-2-oxopropyl phosphate. Catalysis depends on histidine 43, which acts as the Proton acceptor. Residues arginine 45 and histidine 50 each coordinate 1-deoxy-D-xylulose 5-phosphate. Glutamate 69 functions as the Proton acceptor in the catalytic mechanism. Threonine 99 contacts 1-deoxy-D-xylulose 5-phosphate. Catalysis depends on histidine 185, which acts as the Proton donor. Residues glycine 186 and 207-208 (GH) contribute to the 3-amino-2-oxopropyl phosphate site.

This sequence belongs to the PNP synthase family. Homooctamer; tetramer of dimers.

The protein resides in the cytoplasm. It carries out the reaction 3-amino-2-oxopropyl phosphate + 1-deoxy-D-xylulose 5-phosphate = pyridoxine 5'-phosphate + phosphate + 2 H2O + H(+). The protein operates within cofactor biosynthesis; pyridoxine 5'-phosphate biosynthesis; pyridoxine 5'-phosphate from D-erythrose 4-phosphate: step 5/5. In terms of biological role, catalyzes the complicated ring closure reaction between the two acyclic compounds 1-deoxy-D-xylulose-5-phosphate (DXP) and 3-amino-2-oxopropyl phosphate (1-amino-acetone-3-phosphate or AAP) to form pyridoxine 5'-phosphate (PNP) and inorganic phosphate. This Gluconobacter oxydans (strain 621H) (Gluconobacter suboxydans) protein is Pyridoxine 5'-phosphate synthase.